Here is a 490-residue protein sequence, read N- to C-terminus: GTPase Der (490 aa).

2 consecutive EngA-type G domains span residues 3–166 and 203–376; these read PVVA…MEDL and IKLA…DSST. Residues 9–16, 56–60, 118–121, 209–216, 256–260, and 321–324 each bind GTP; these read GRPNVGKS, DTGGI, NKTD, DTAGV, and NKWD. Residues 377–461 form the KH-like domain; that stretch reads RRVGTSMLTR…PIRIQFKEGE (85 aa).

Belongs to the TRAFAC class TrmE-Era-EngA-EngB-Septin-like GTPase superfamily. EngA (Der) GTPase family. As to quaternary structure, associates with the 50S ribosomal subunit.

In terms of biological role, GTPase that plays an essential role in the late steps of ribosome biogenesis. This Escherichia coli O127:H6 (strain E2348/69 / EPEC) protein is GTPase Der.